The primary structure comprises 316 residues: Malate dehydrogenase (316 aa).

NAD(+) contacts are provided by residues 12-17 (GAGNIG) and Asp36. 2 residues coordinate substrate: Arg85 and Arg91. NAD(+) is bound by residues Asn98 and 121 to 123 (VTN). Substrate-binding residues include Asn123 and Arg154. Residue His178 is the Proton acceptor of the active site.

This sequence belongs to the LDH/MDH superfamily. MDH type 3 family.

The enzyme catalyses (S)-malate + NAD(+) = oxaloacetate + NADH + H(+). Functionally, catalyzes the reversible oxidation of malate to oxaloacetate. This is Malate dehydrogenase from Wolbachia pipientis wMel.